The sequence spans 320 residues: Ferrochelatase (320 aa).

His194 and Glu275 together coordinate Fe cation.

This sequence belongs to the ferrochelatase family.

It is found in the cytoplasm. The enzyme catalyses heme b + 2 H(+) = protoporphyrin IX + Fe(2+). The protein operates within porphyrin-containing compound metabolism; protoheme biosynthesis; protoheme from protoporphyrin-IX: step 1/1. In terms of biological role, catalyzes the ferrous insertion into protoporphyrin IX. This Pectobacterium atrosepticum (strain SCRI 1043 / ATCC BAA-672) (Erwinia carotovora subsp. atroseptica) protein is Ferrochelatase.